A 132-amino-acid chain; its full sequence is Large ribosomal subunit protein uL14 (132 aa).

It belongs to the universal ribosomal protein uL14 family. Part of the 50S ribosomal subunit. Forms a cluster with proteins L3 and L24e, part of which may contact the 16S rRNA in 2 intersubunit bridges.

Functionally, binds to 23S rRNA. Forms part of two intersubunit bridges in the 70S ribosome. The protein is Large ribosomal subunit protein uL14 of Thermoplasma volcanium (strain ATCC 51530 / DSM 4299 / JCM 9571 / NBRC 15438 / GSS1).